Here is a 316-residue protein sequence, read N- to C-terminus: Protoheme IX farnesyltransferase (316 aa).

A run of 9 helical transmembrane segments spans residues 32–52 (VMSLVVFTAFAGLVLAPGHIH), 53–73 (PVLGLIAILCIAVGAGASGAL), 93–113 (IPAGRIAPSEALAFGLVLSGF), 116–136 (VILGLAVNWLSAGILAFTIFF), 152–172 (NIVIGGAAGAFPPMIGWACVT), 180–200 (TVLFLIIFLWTPAHFWALALF), 221–241 (VTKHQIVAYAVLTAVCGILPS), 252–271 (LVAAALGAIFIYCSIAVWRM), and 289–309 (IFYLFAVFSALMIDRLASIFV).

Belongs to the UbiA prenyltransferase family. Protoheme IX farnesyltransferase subfamily.

The protein localises to the cell inner membrane. The enzyme catalyses heme b + (2E,6E)-farnesyl diphosphate + H2O = Fe(II)-heme o + diphosphate. It participates in porphyrin-containing compound metabolism; heme O biosynthesis; heme O from protoheme: step 1/1. Converts heme B (protoheme IX) to heme O by substitution of the vinyl group on carbon 2 of heme B porphyrin ring with a hydroxyethyl farnesyl side group. The chain is Protoheme IX farnesyltransferase from Rhizobium leguminosarum bv. trifolii (strain WSM2304).